Consider the following 496-residue polypeptide: Sporulation-killing factor biosynthesis protein SkfC (496 aa).

Transmembrane regions (helical) follow at residues 1–21 (MNSL…LLFI), 224–244 (VSGM…LVFM), 248–268 (TSII…SLTL), 291–311 (LLGI…VFIC), 331–351 (IVQI…TSLL), 399–419 (LLMI…IIVS), and 443–463 (FIFG…CVLV).

It localises to the membrane. Functionally, required for production of the bacteriocin SkfA. This is Sporulation-killing factor biosynthesis protein SkfC from Bacillus subtilis (strain 168).